A 367-amino-acid polypeptide reads, in one-letter code: Gibberellin 20 oxidase 3 (367 aa).

One can recognise a Fe2OG dioxygenase domain in the interval 198-304; it reads DGDPVMRLNH…RRSLTFFLNP (107 aa). Tyr-208 provides a ligand contact to 2-oxoglutarate. 3 residues coordinate Fe cation: His-223, Asp-225, and His-285. 2 residues coordinate 2-oxoglutarate: Arg-295 and Ser-297.

It belongs to the iron/ascorbate-dependent oxidoreductase family. The cofactor is Fe(2+). L-ascorbate is required as a cofactor.

The enzyme catalyses gibberellin A12 + 2 2-oxoglutarate + 3 O2 + H(+) = gibberellin A9 + 2 succinate + 3 CO2 + 2 H2O. It catalyses the reaction gibberellin A53 + 2 2-oxoglutarate + 3 O2 + H(+) = gibberellin A20 + 2 succinate + 3 CO2 + 2 H2O. Key oxidase enzyme in the biosynthesis of gibberellin. Catalyzes the formation of bioactive gibberellins (GAs) via a three-step oxidation at C-20 of the GA skeleton. Controls the elongation of the vegetative shoot and plant height by the regulation of active gibberellin levels. In Oryza sativa subsp. japonica (Rice), this protein is Gibberellin 20 oxidase 3.